The sequence spans 376 residues: Chaperone protein DnaJ (376 aa).

Residues 5–70 enclose the J domain; sequence DYYEVLGVAR…NKRRMYDSHG (66 aa). The CR-type zinc-finger motif lies at 132-209; the sequence is GVERRIEIPT…CHGNGRVEED (78 aa). Zn(2+)-binding residues include Cys-145, Cys-148, Cys-161, Cys-164, Cys-183, Cys-186, Cys-197, and Cys-200. 4 CXXCXGXG motif repeats span residues 145–152, 161–168, 183–190, and 197–204; these read CGDCDGSG, CNVCHGRG, CHNCGGRG, and CKTCHGNG. Residues 223-242 are disordered; it reads GDRIRLSGEGEAGPAGTPPG.

The protein belongs to the DnaJ family. In terms of assembly, homodimer. Requires Zn(2+) as cofactor.

It localises to the cytoplasm. Its function is as follows. Participates actively in the response to hyperosmotic and heat shock by preventing the aggregation of stress-denatured proteins and by disaggregating proteins, also in an autonomous, DnaK-independent fashion. Unfolded proteins bind initially to DnaJ; upon interaction with the DnaJ-bound protein, DnaK hydrolyzes its bound ATP, resulting in the formation of a stable complex. GrpE releases ADP from DnaK; ATP binding to DnaK triggers the release of the substrate protein, thus completing the reaction cycle. Several rounds of ATP-dependent interactions between DnaJ, DnaK and GrpE are required for fully efficient folding. Also involved, together with DnaK and GrpE, in the DNA replication of plasmids through activation of initiation proteins. In Stenotrophomonas maltophilia (strain R551-3), this protein is Chaperone protein DnaJ.